The sequence spans 779 residues: FAD-dependent monooxygenase BOA8 (779 aa).

Glu85, Arg128, Asp331, and Ala344 together coordinate FAD. The next 7 membrane-spanning stretches (helical) occupy residues 471–491, 504–524, 542–562, 587–607, 618–638, 665–685, and 742–762; these read AQLALPLILIALWFFWKKTPE, VKLDMLSSIANAIPFATIWTI, AFLLLAQKLGIELVAPIYFFF, ILPLAILSIFLGPSYCIWSSI, NAWYWYPVYLTMFLRILKFIV, ILICAAFYLYGSLSSSTSIAF, and LILTIXLSSTFLAGPGVGLIV.

Belongs to the paxM FAD-dependent monooxygenase family. FAD is required as a cofactor.

Its subcellular location is the membrane. The protein operates within polyketide biosynthesis. FAD-dependent monooxygenase; part of the gene cluster B that mediates the biosynthesis of botcinic acid and its botcinin derivatives, acetate-derived polyketides that contribute to virulence when combined with the sesquiterpene botrydial. Botcinic acid and its derivatives have been shown to induce chlorosis and necrosis during host plant infection, but also have antifungal activities. Two polyketide synthases, BOA6 and BOA9, are involved in the biosynthesis of botcinins. BOA6 mediates the formation of the per-methylated tetraketide core by condensation of four units of malonyl-CoA with one unit of acetyl-CoA, which would be methylated in activated methylene groups to yield a bicyclic acid intermediate that could then either be converted to botrylactone derivatives or lose the starter acetate unit through a retro-Claisen type C-C bond cleavage to yield botcinin derivatives. The second polyketide synthase, BOA9, is probably required for the biosynthesis of the tetraketide side chain of botcinins. The methyltransferase (MT) domain within BOA6 is probably responsible for the incorporation of four methyl groups. The trans-enoyl reductase BOA5 might take over the enoyl reductase function of BOA6 that misses an ER domain. The monooxygenases BOA2, BOA3 and BOA4 might be involved in further hydroxylations at C4, C5 and C8, whereas BOA7, close to BOA9, could potentially be involved in the hydroxylation at C4 in the side chain of botcinins. The protein is FAD-dependent monooxygenase BOA8 of Botryotinia fuckeliana (strain B05.10) (Noble rot fungus).